A 439-amino-acid chain; its full sequence is FBD-associated F-box protein At5g56380 (439 aa).

Residues Met-1–Pro-61 enclose the F-box domain. Residues Trp-358–Thr-406 form the FBD domain.

This chain is FBD-associated F-box protein At5g56380, found in Arabidopsis thaliana (Mouse-ear cress).